Consider the following 148-residue polypeptide: Large ribosomal subunit protein bL9 (148 aa).

The protein belongs to the bacterial ribosomal protein bL9 family.

In terms of biological role, binds to the 23S rRNA. The sequence is that of Large ribosomal subunit protein bL9 from Stutzerimonas stutzeri (strain A1501) (Pseudomonas stutzeri).